Consider the following 1220-residue polypeptide: Formin-F (1220 aa).

Residues 1–10 are compositionally biased toward basic residues; that stretch reads MNRIFGRKKK. A disordered region spans residues 1–62; sequence MNRIFGRKKK…TNSKSADKFD (62 aa). Residues 6–373 enclose the GBD/FH3 domain; it reads GRKKKDKDSD…QISVNKPMIG (368 aa). A compositionally biased stretch (basic and acidic residues) spans 11–20; the sequence is DKDSDEKGST. Positions 41–56 are enriched in polar residues; it reads AYSSLQPDGNNSTNSK. The stretch at 392–428 forms a coiled coil; sequence VALQSEFQKNIEELAKVKDQLKKANFDLNIANQELSS. 3 disordered regions span residues 461–659, 711–732, and 1049–1192; these read IDSN…KFTV, SQKK…GTVS, and DEAK…KKDI. Low complexity-rich tracts occupy residues 501-518 and 525-554; these read SKPP…SSSQ and SNLS…PQQQ. In terms of domain architecture, FH1 spans 532-655; that stretch reads SDSLSNDFKS…NSNKPPANAP (124 aa). Over residues 555-564 the composition is skewed to polar residues; it reads NIESTLTPEP. Residues 575 to 638 are compositionally biased toward pro residues; sequence TTPPPAPPAP…GKGGPPPPPG (64 aa). The region spanning 656-1054 is the FH2 domain; sequence KFTVSKPTTK…AIKRDEAKAK (399 aa). The span at 711–722 shows a compositional bias: basic and acidic residues; it reads SQKKLEASDKKS. Residues 1032–1062 adopt a coiled-coil conformation; that stretch reads YKDFQRDKEAAERAIKRDEAKAKKAQQLKRM. Positions 1066–1083 are enriched in polar residues; it reads IASSTNNKNPLASSSTSV. The DAD domain occupies 1083 to 1158; that stretch reads VGDGGMVEDI…TPSKSGSRRE (76 aa). A compositionally biased stretch (low complexity) spans 1117-1142; sequence DSSSITTISEQSENSNTSSITITTPS. The span at 1161–1192 shows a compositional bias: basic and acidic residues; that stretch reads TSKSSDKDKEKEKEKEKQCESTESEDINKKDI.

It belongs to the formin homology family. Diaphanous subfamily. In terms of assembly, interacts (via GBD/FH3 domain) with activated Rho-GTPases.

Formins play an important role in the nucleation of actin and the formation of linear actin filaments. This chain is Formin-F (forF), found in Dictyostelium discoideum (Social amoeba).